Here is a 308-residue protein sequence, read N- to C-terminus: Porphobilinogen deaminase (308 aa).

Cys-241 bears the S-(dipyrrolylmethanemethyl)cysteine mark.

It belongs to the HMBS family. In terms of assembly, monomer. The cofactor is dipyrromethane.

The catalysed reaction is 4 porphobilinogen + H2O = hydroxymethylbilane + 4 NH4(+). Its pathway is porphyrin-containing compound metabolism; protoporphyrin-IX biosynthesis; coproporphyrinogen-III from 5-aminolevulinate: step 2/4. In terms of biological role, tetrapolymerization of the monopyrrole PBG into the hydroxymethylbilane pre-uroporphyrinogen in several discrete steps. The protein is Porphobilinogen deaminase of Staphylococcus saprophyticus subsp. saprophyticus (strain ATCC 15305 / DSM 20229 / NCIMB 8711 / NCTC 7292 / S-41).